Here is a 753-residue protein sequence, read N- to C-terminus: MGNSFLIADTSSLVIGLLLILNGVFISAAKHYGLNKIHIVHLGAKQHDTPELVTKSHYQILEPLLGSKEAAKNSLVYNYKHGFSGFAAKLTASQAKNLSAHPEVLRVVPSRVMRLKTTRTFDYLGLLPTSPKSLLHKTKMGSEAIIGVIDSGIWPESQSFNDTGLGPIPKRWKGKCLSGNGFDAKKHCNKKLIGAEYLTVGLMEMTDGIYDYPSLGESMSPRDHVGHGTHVAAIAAGSFVANANYKGLAGGTARGAAPHARIAMYKVCWREVGCITADLLKAIDHSIRDGVDVISISIGTDAPASFDIDQSDIGFGSFHAVMKGIPVVASAGNEGPNAQTVDNVAPWIITVAATSLDRSFPIPITLGNNLTILGEGLNTFPEVGFTNLILSDEMLSRSIEQGKTQGTIVLAFTANDEMIRKANSITNAGCAGIIYAQSVIDPTVCSSVDVPCAVVDYEYGTDILYYMQTTVVPKAKLSPSKTLIGRPIASRVPRFSCRGPNSVSPAILKPDIAAPGVNVLSAVSGVYKFMSGTSMATPAVSGIVGLLRQTHPHWSPAAIRSALVTTAWKTDPSGEPIFSEGSTRKLADPFDYGGGLINPEKVTHPGLIYDMGIDDYLHYLCSAEYDDDSISKLLGKTYNCTSPKPSMLDFNLPSITIPSLTGEVTVTRTVRNVGPARSVYRPVIESPLGIELDVKPKTLVFGSNITKITFSVRVKSSHRVNTDFYFGSLCWTDGVHNVTIPVSVRTKFMRNYV.

The first 29 residues, 1-29, serve as a signal peptide directing secretion; that stretch reads MGNSFLIADTSSLVIGLLLILNGVFISAA. Residues 30–116 constitute a propeptide, activation peptide; it reads KHYGLNKIHI…VVPSRVMRLK (87 aa). The region spanning 38 to 115 is the Inhibitor I9 domain; the sequence is HIVHLGAKQH…RVVPSRVMRL (78 aa). An N-linked (GlcNAc...) asparagine glycan is attached at N97. The Peptidase S8 domain occupies 120-603; it reads TFDYLGLLPT…GGLINPEKVT (484 aa). D150 acts as the Charge relay system in catalysis. The N-linked (GlcNAc...) asparagine glycan is linked to N161. Catalysis depends on H227, which acts as the Charge relay system. A glycan (N-linked (GlcNAc...) asparagine) is linked at N369. S534 functions as the Charge relay system in the catalytic mechanism. N-linked (GlcNAc...) asparagine glycans are attached at residues N639, N704, and N737.

Belongs to the peptidase S8 family.

Its subcellular location is the secreted. The sequence is that of Subtilisin-like protease SBT3.17 from Arabidopsis thaliana (Mouse-ear cress).